We begin with the raw amino-acid sequence, 415 residues long: Multidrug resistance protein MdtA (415 aa).

Residues 1–21 (MKGSYKSRWVIVIVVVIAAIA) form the signal peptide. Disordered stretches follow at residues 32-59 (SRSAAPGATKQAQQSPAGGRRGMRSGPL) and 392-415 (EAQSATTSEEKATSREYAKKGARS). A compositionally biased stretch (basic and acidic residues) spans 399–415 (SEEKATSREYAKKGARS).

Belongs to the membrane fusion protein (MFP) (TC 8.A.1) family. Part of a tripartite efflux system composed of MdtA, MdtB and MdtC.

The protein resides in the cell inner membrane. The MdtABC tripartite complex confers resistance against novobiocin and deoxycholate. This Escherichia coli O17:K52:H18 (strain UMN026 / ExPEC) protein is Multidrug resistance protein MdtA.